The chain runs to 379 residues: Putative glutamate--cysteine ligase 2 (379 aa).

This sequence belongs to the glutamate--cysteine ligase type 2 family. YbdK subfamily.

The enzyme catalyses L-cysteine + L-glutamate + ATP = gamma-L-glutamyl-L-cysteine + ADP + phosphate + H(+). Its function is as follows. ATP-dependent carboxylate-amine ligase which exhibits weak glutamate--cysteine ligase activity. The sequence is that of Putative glutamate--cysteine ligase 2 from Mycobacterium avium (strain 104).